Consider the following 122-residue polypeptide: Small ribosomal subunit protein uS13 (122 aa).

Positions 96–122 (LPVHGQRTKTNARTRKGPARTVAGKKK) are disordered.

This sequence belongs to the universal ribosomal protein uS13 family. Part of the 30S ribosomal subunit. Forms a loose heterodimer with protein S19. Forms two bridges to the 50S subunit in the 70S ribosome.

Functionally, located at the top of the head of the 30S subunit, it contacts several helices of the 16S rRNA. In the 70S ribosome it contacts the 23S rRNA (bridge B1a) and protein L5 of the 50S subunit (bridge B1b), connecting the 2 subunits; these bridges are implicated in subunit movement. Contacts the tRNAs in the A and P-sites. The chain is Small ribosomal subunit protein uS13 from Geotalea daltonii (strain DSM 22248 / JCM 15807 / FRC-32) (Geobacter daltonii).